The primary structure comprises 917 residues: MTPDKDAPLREDIRLLGRLLGDTVRDQQGAASFDLIERIRQTSVRFRRDEDLAARRELEDTLDALSREQTIQVVRAFSYFSHLANIAEDQHHIRRSRAHLLAGSAPREGSLAHAVGHALDEQRLDPTDLAAFFDTALISPVLTAHPTEVQRKSILNCQTVIARLLDERDRMQLTPDEAEANLDALRRAVLTLWQTRMLRPAKLSVIDEVNNGLSYFETTFLRELPRLYAALEDRLAGAQPALANHELPAFLQVGSWIGGDRDGNPYVTADVLEEALAMQARVALDYYLDELHTLGSQLSLSQGLVGASDALLALADRSPDQSPHRSDEPYRRAIAGIYARLSATYRNLLGHPPARHAVAEAEPYADVAALADDLDTLHRSLVANGTAALARGRLRHLRRAVRVFGFHLAPIDLRQNSDVHERVVAELLEVARPGAAYLAQDEAGRCALLLDELATARPLASPHVRYSDDSEGELAIFRAARRAHLRYGRGAIHNCIISKTDDLSDLLELAVLLKEAGLLRPLEKALDVNIVPLFETIGDLENAAGVMDRLFSIPVYRELLAARDQTQEVMLGYSDSNKDGGFLTSGWALYKAEGELVEVFGRHGVRLRLFHGRGGSVGRGGGPSYQAILAQPDGAVQGQIRLTEQGEVIAAKYGNPEVGRRNLEVLVAATLETSLRRDGGDATPRTFLDTMQALSDAAFTCYRGLVYETPGFEQYFWESTVISEIAGLNIGSRPASRKKGTRIDDLRAIPWVFSWSQCRLMLPGWFGFGSAVKQWLAAHPKDGLGLLQRMYREWSFFATLLSNMDMVLSKTDLAIASRYAELVKDPVLRDSIFERIRSEWKDTVDALLAITEQVELLDANPLLKRSIRNRFPYLDPLNHVQVELLRRHREGNGEDARIRNGIHISINGIAAGLRNSG.

Catalysis depends on residues histidine 145 and lysine 578.

Belongs to the PEPCase type 1 family. It depends on Mg(2+) as a cofactor.

It carries out the reaction oxaloacetate + phosphate = phosphoenolpyruvate + hydrogencarbonate. Forms oxaloacetate, a four-carbon dicarboxylic acid source for the tricarboxylic acid cycle. The protein is Phosphoenolpyruvate carboxylase of Azoarcus sp. (strain BH72).